A 191-amino-acid polypeptide reads, in one-letter code: Auxin-responsive protein IAA32 (191 aa).

An EAR-like (transcriptional repression) motif is present at residues 32–36 (LGLSL). The 87-residue stretch at 98–184 (YAYVKVNLDG…SVDRMRIARR (87 aa)) folds into the PB1 domain.

The protein belongs to the Aux/IAA family. In terms of assembly, homodimers and heterodimers.

It localises to the nucleus. Aux/IAA proteins are short-lived transcriptional factors that function as repressors of early auxin response genes at low auxin concentrations. Repression is thought to result from the interaction with auxin response factors (ARFs), proteins that bind to the auxin-responsive promoter element (AuxRE). Formation of heterodimers with ARF proteins may alter their ability to modulate early auxin response genes expression. The sequence is that of Auxin-responsive protein IAA32 from Arabidopsis thaliana (Mouse-ear cress).